The sequence spans 215 residues: Thymidylate kinase (215 aa).

11 to 18 (GIDGAGKS) lines the ATP pocket.

The protein belongs to the thymidylate kinase family.

The enzyme catalyses dTMP + ATP = dTDP + ADP. Its function is as follows. Phosphorylation of dTMP to form dTDP in both de novo and salvage pathways of dTTP synthesis. In Nitrosomonas europaea (strain ATCC 19718 / CIP 103999 / KCTC 2705 / NBRC 14298), this protein is Thymidylate kinase.